Reading from the N-terminus, the 379-residue chain is Class V chitinase (379 aa).

An N-terminal signal peptide occupies residues 1–24; that stretch reads MSSTKLISLIVSITFFLTLQCSMA. A GH18 domain is found at 27-369; the sequence is VVKASYWFPA…RAASQAWDAT (343 aa). Gly99 is a chitin binding site. Glu140 functions as the Proton donor in the catalytic mechanism. Position 259 (Tyr259) interacts with chitin. Residues Asn307 and Asn327 are each glycosylated (N-linked (GlcNAc...) asparagine). Position 348 (Trp348) interacts with chitin.

Belongs to the glycosyl hydrolase 18 family. Chitinase class V subfamily.

It carries out the reaction Random endo-hydrolysis of N-acetyl-beta-D-glucosaminide (1-&gt;4)-beta-linkages in chitin and chitodextrins.. The enzyme catalyses Hydrolysis of N,N'-diacetylchitobiose from the non-reducing end of chitin and chitodextrins.. It functions in the pathway glycan degradation; chitin degradation. In terms of biological role, can hydrolyze glycol chitin and chitin oligosaccharides (e.g. N-acetylglucosamine) (GlcNAc)4, (GlcNAc)5 and (GlcNAc)6. Hydrolyzes N-acetylglucosamine oligomers producing dimers from the non-reducing end of the substrates. In Arabidopsis thaliana (Mouse-ear cress), this protein is Class V chitinase.